Here is a 221-residue protein sequence, read N- to C-terminus: Glutathione peroxidase 6 (221 aa).

An N-terminal signal peptide occupies residues methionine 1–alanine 19. Residue cysteine 73 is part of the active site.

Belongs to the glutathione peroxidase family. In terms of tissue distribution, expressed in the Bowman glands.

Its subcellular location is the secreted. It carries out the reaction 2 glutathione + H2O2 = glutathione disulfide + 2 H2O. The sequence is that of Glutathione peroxidase 6 (Gpx6) from Rattus norvegicus (Rat).